The chain runs to 401 residues: Glutamyl-tRNA reductase (401 aa).

Substrate is bound by residues 45-48, serine 101, 106-108, and glutamine 112; these read TCNR and EDQ. The active-site Nucleophile is cysteine 46. 177-182 serves as a coordination point for NADP(+); that stretch reads GYGDVG.

It belongs to the glutamyl-tRNA reductase family. As to quaternary structure, homodimer.

The enzyme catalyses (S)-4-amino-5-oxopentanoate + tRNA(Glu) + NADP(+) = L-glutamyl-tRNA(Glu) + NADPH + H(+). It functions in the pathway porphyrin-containing compound metabolism; protoporphyrin-IX biosynthesis; 5-aminolevulinate from L-glutamyl-tRNA(Glu): step 1/2. Its function is as follows. Catalyzes the NADPH-dependent reduction of glutamyl-tRNA(Glu) to glutamate 1-semialdehyde (GSA). This chain is Glutamyl-tRNA reductase, found in Clostridium botulinum (strain Eklund 17B / Type B).